Consider the following 89-residue polypeptide: Large ribosomal subunit protein bL28 (89 aa).

This sequence belongs to the bacterial ribosomal protein bL28 family.

This Chlamydia trachomatis serovar L2 (strain ATCC VR-902B / DSM 19102 / 434/Bu) protein is Large ribosomal subunit protein bL28.